The chain runs to 134 residues: Interleukin-5 (134 aa).

An N-terminal signal peptide occupies residues 1-19 (MRMLLHLSLLALGAAYVYA). An O-linked (GalNAc...) threonine glycan is attached at Thr-22. Asn-47 carries N-linked (GlcNAc...) asparagine glycosylation.

The protein belongs to the IL-5 family. In terms of assembly, homodimer; disulfide-linked. Interacts with IL5RA. Interacts with CSF2RB. As to expression, present in peripheral blood mononuclear cells.

The protein resides in the secreted. Homodimeric cytokine expressed predominantly by T-lymphocytes and NK cells that plays an important role in the survival, differentiation, and chemotaxis of eosinophils. Also acts on activated and resting B-cells to induce immunoglobulin production, growth, and differentiation. Mechanistically, exerts its biological effects through a receptor composed of IL5RA subunit and the cytokine receptor common subunit beta/CSF2RB. Binding to the receptor leads to activation of various kinases including LYN, SYK and JAK2 and thereby propagates signals through the RAS-MAPK and JAK-STAT5 pathways respectively. This Homo sapiens (Human) protein is Interleukin-5 (IL5).